A 517-amino-acid polypeptide reads, in one-letter code: Meiosis-specific transcription factor mei4 (517 aa).

The segment at residues 81–172 (KPPCSYATLI…QNFVSVRLHR (92 aa)) is a DNA-binding region (fork-head). The disordered stretch occupies residues 170-278 (LHRSHSTDSN…PNAETQEDLP (109 aa)). The span at 209-223 (NSFNSSTSTSGSSSN) shows a compositional bias: low complexity. A compositionally biased stretch (polar residues) spans 230–246 (NDASQPSNQDSSLNSNI). The span at 254–270 (SNVQSNSSSSENVPKPN) shows a compositional bias: low complexity.

It localises to the nucleus. Its function is as follows. Functions as a meiosis-specific transcription factor. Binds to the 5'-GTAAAYA-3' consensus sequence of the promoter of the spo6 gene. The protein is Meiosis-specific transcription factor mei4 (mei4) of Schizosaccharomyces pombe (strain 972 / ATCC 24843) (Fission yeast).